The primary structure comprises 355 residues: Ferrochelatase (355 aa).

Fe cation contacts are provided by H214 and E295.

Belongs to the ferrochelatase family.

Its subcellular location is the cytoplasm. It catalyses the reaction heme b + 2 H(+) = protoporphyrin IX + Fe(2+). It functions in the pathway porphyrin-containing compound metabolism; protoheme biosynthesis; protoheme from protoporphyrin-IX: step 1/1. Functionally, catalyzes the ferrous insertion into protoporphyrin IX. This chain is Ferrochelatase, found in Burkholderia thailandensis (strain ATCC 700388 / DSM 13276 / CCUG 48851 / CIP 106301 / E264).